Here is a 231-residue protein sequence, read N- to C-terminus: UPF0653 protein C607.02c (231 aa).

Disordered stretches follow at residues 1–33 (MPTK…VDDN), 47–68 (YHES…KKDY), 93–132 (SFKS…ENFE), and 147–178 (IESR…APPE). Over residues 9–27 (SVLEAERKKIGLDHAPKED) the composition is skewed to basic and acidic residues. Basic residues-rich tracts occupy residues 53 to 67 (KEIK…KKKD) and 109 to 119 (EKKKIAKRKEK).

The protein belongs to the UPF0653 family.

Its subcellular location is the nucleus. The protein resides in the nucleolus. The polypeptide is UPF0653 protein C607.02c (Schizosaccharomyces pombe (strain 972 / ATCC 24843) (Fission yeast)).